Consider the following 354-residue polypeptide: Selection and upkeep of intraepithelial T-cells protein 10 (354 aa).

The N-terminal stretch at M1–S52 is a signal peptide. The region spanning L53–V141 is the Ig-like V-type domain. The Extracellular segment spans residues L53 to K158. An intrachain disulfide couples C71 to C125. The N-linked (GlcNAc...) asparagine glycan is linked to N129. The helical transmembrane segment at F159–L179 threads the bilayer. Residues D180 to C209 are Cytoplasmic-facing. The helical transmembrane segment at C210–L230 threads the bilayer. Residues K231–D252 are Extracellular-facing. The helical transmembrane segment at I253 to W273 threads the bilayer. At T274–T354 the chain is on the cytoplasmic side.

The protein belongs to the SKINT family. As to expression, expressed in skin and thymus.

Its subcellular location is the membrane. May act by engaging a cell surface molecule on immature T-cells in the embryonic thymus. This chain is Selection and upkeep of intraepithelial T-cells protein 10 (Skint10), found in Mus musculus (Mouse).